We begin with the raw amino-acid sequence, 952 residues long: Ent-kaur-16-ene synthase (952 aa).

Mg(2+) contacts are provided by D668, E672, N848, D849, S852, and D856. The DEXXE motif motif lies at 668-672; sequence DEYME.

Belongs to the terpene synthase family. Mg(2+) serves as cofactor.

It carries out the reaction ent-copalyl diphosphate = ent-kaur-16-ene + diphosphate. It catalyses the reaction (2E,6E,10E)-geranylgeranyl diphosphate = ent-copalyl diphosphate. It functions in the pathway plant hormone biosynthesis; gibberellin biosynthesis. Its function is as follows. Catalyzes the conversion of geranylgeranyl diphosphate to the gibberellin precursor ent-kaurene diphosphate in a two step process. The polypeptide is Ent-kaur-16-ene synthase (cps) (Fusarium fujikuroi (Bakanae and foot rot disease fungus)).